Reading from the N-terminus, the 520-residue chain is Probable glycerol-3-phosphate acyltransferase 3 (520 aa).

5 helical membrane passes run 5–20 (ISIF…RFIL), 64–84 (YFML…LFIL), 88–108 (ISLM…FFGI), 264–284 (TLMN…AAAA), and 286–306 (LFVS…FSGC). Positions 334–339 (HRTLLD) match the HXXXXD motif motif.

It belongs to the GPAT/DAPAT family. In terms of tissue distribution, widely expressed at low level. Expressed at higher level in seedlings and leaves.

It localises to the membrane. The enzyme catalyses sn-glycerol 3-phosphate + an acyl-CoA = a 1-acyl-sn-glycero-3-phosphate + CoA. It functions in the pathway phospholipid metabolism; CDP-diacylglycerol biosynthesis; CDP-diacylglycerol from sn-glycerol 3-phosphate: step 1/3. Esterifies acyl-group from acyl-ACP to the sn-1 position of glycerol-3-phosphate, an essential step in glycerolipid biosynthesis. This Arabidopsis thaliana (Mouse-ear cress) protein is Probable glycerol-3-phosphate acyltransferase 3 (GPAT3).